The chain runs to 229 residues: Potassium/proton antiporter CemA (229 aa).

The next 4 helical transmembrane spans lie at 7 to 27, 114 to 134, 154 to 174, and 189 to 209; these read FTPL…SLSF, ITCF…LVIL, ILLL…ELMI, and IISG…KYWI.

It belongs to the CemA family.

The protein resides in the plastid. Its subcellular location is the chloroplast inner membrane. The catalysed reaction is K(+)(in) + H(+)(out) = K(+)(out) + H(+)(in). Its function is as follows. Contributes to K(+)/H(+) antiport activity by supporting proton efflux to control proton extrusion and homeostasis in chloroplasts in a light-dependent manner to modulate photosynthesis. Prevents excessive induction of non-photochemical quenching (NPQ) under continuous-light conditions. Indirectly promotes efficient inorganic carbon uptake into chloroplasts. The sequence is that of Potassium/proton antiporter CemA from Platanus occidentalis (Sycamore).